The sequence spans 131 residues: Large ribosomal subunit protein bL21 (131 aa).

Basic and acidic residues predominate over residues 106–116 (TIDDMPKKEAA). Residues 106–131 (TIDDMPKKEAAPAKARRSTKKAAAAE) are disordered.

This sequence belongs to the bacterial ribosomal protein bL21 family. Part of the 50S ribosomal subunit. Contacts protein L20.

This protein binds to 23S rRNA in the presence of protein L20. The sequence is that of Large ribosomal subunit protein bL21 from Koribacter versatilis (strain Ellin345).